Here is a 399-residue protein sequence, read N- to C-terminus: Argininosuccinate synthase (399 aa).

8-16 (AYSGGLDTS) contributes to the ATP binding site. Residue Tyr87 participates in L-citrulline binding. Gly117 is an ATP binding site. L-aspartate is bound by residues Thr119, Asn123, and Asp124. Residue Asn123 coordinates L-citrulline. Arg127, Ser175, Glu259, and Tyr271 together coordinate L-citrulline.

Belongs to the argininosuccinate synthase family. Type 1 subfamily. Homotetramer.

The protein resides in the cytoplasm. It carries out the reaction L-citrulline + L-aspartate + ATP = 2-(N(omega)-L-arginino)succinate + AMP + diphosphate + H(+). It participates in amino-acid biosynthesis; L-arginine biosynthesis; L-arginine from L-ornithine and carbamoyl phosphate: step 2/3. This is Argininosuccinate synthase from Corynebacterium diphtheriae (strain ATCC 700971 / NCTC 13129 / Biotype gravis).